We begin with the raw amino-acid sequence, 1678 residues long: Clathrin heavy chain (1678 aa).

WD40-like repeat regions lie at residues 24 to 67 (SFSF…RPIS), 68 to 107 (ADSAIMNPASKVIALKAQKTLQIFNIEMKSKMKAHTMNED), 108 to 149 (VVFW…SSLN), 150 to 195 (GCQI…QAIE), 196 to 257 (GHAA…PEAQ), 258 to 301 (NDFP…ISAD), and 302 to 330 (TIFVTAPHEASGGIIGVNRKGQVLSVTVD). CHCR repeat units follow at residues 538-684 (VAEE…QICV), 687-829 (ATKY…SEDI), 834-973 (ILVV…QLID), 980-1125 (LSET…VKEA), 1129-1270 (YIKA…FRLA), 1275-1421 (LHIV…LLLN), and 1424-1567 (LLVL…YDCF). An involved in binding clathrin light chain region spans residues 1334–1643 (REHLELFWSR…IQMEPQLMIT (310 aa)). Positions 1552–1677 (EELLGWFLER…AGGRNMGYPY (126 aa)) are trimerization.

The protein belongs to the clathrin heavy chain family. As to quaternary structure, clathrin triskelions, composed of 3 heavy chains and 3 light chains, are the basic subunits of the clathrin coat. Interacts with sau.

The protein localises to the cytoplasmic vesicle membrane. The protein resides in the membrane. It is found in the coated pit. Clathrin is the major protein of the polyhedral coat of coated pits and vesicles. This Drosophila melanogaster (Fruit fly) protein is Clathrin heavy chain (Chc).